A 289-amino-acid polypeptide reads, in one-letter code: Digeranylgeranylglyceryl phosphate synthase (289 aa).

Transmembrane regions (helical) follow at residues 18 to 38, 47 to 67, 99 to 119, 120 to 140, 163 to 183, 218 to 238, 243 to 263, and 269 to 289; these read LMAG…LISG, AFPF…SGAG, FYFS…INSI, CGSI…TLKG, IFGF…ALAI, LAVL…FMSV, YIYL…QLLV, and KSSK…IAGV.

This sequence belongs to the UbiA prenyltransferase family. DGGGP synthase subfamily. It depends on Mg(2+) as a cofactor.

It is found in the cell membrane. It carries out the reaction sn-3-O-(geranylgeranyl)glycerol 1-phosphate + (2E,6E,10E)-geranylgeranyl diphosphate = 2,3-bis-O-(geranylgeranyl)-sn-glycerol 1-phosphate + diphosphate. It functions in the pathway membrane lipid metabolism; glycerophospholipid metabolism. In terms of biological role, prenyltransferase that catalyzes the transfer of the geranylgeranyl moiety of geranylgeranyl diphosphate (GGPP) to the C2 hydroxyl of (S)-3-O-geranylgeranylglyceryl phosphate (GGGP). This reaction is the second ether-bond-formation step in the biosynthesis of archaeal membrane lipids. This chain is Digeranylgeranylglyceryl phosphate synthase, found in Methanosarcina mazei (strain ATCC BAA-159 / DSM 3647 / Goe1 / Go1 / JCM 11833 / OCM 88) (Methanosarcina frisia).